The chain runs to 359 residues: snRNA-activating protein complex subunit 2 (359 aa).

Basic residues predominate over residues 1–11 (MKPPQRRRRVP). 3 disordered regions span residues 1–22 (MKPPQRRRRVPARYVGEATGPT), 157–221 (NQDG…GSST), and 291–327 (TALPGEKRPRPGTEDGGTGSTGPEEPDQASPQASEPI).

In terms of assembly, part of the SNAPc complex composed of 5 subunits: SNAPC1, SNAPC2, SNAPC3, SNAPC4 and SNAPC5. SNAPC2 interacts with TBP and SNAPC4.

It localises to the nucleus. Functionally, part of the SNAPc complex required for the transcription of both RNA polymerase II and III small-nuclear RNA genes. Binds to the proximal sequence element (PSE), a non-TATA-box basal promoter element common to these 2 types of genes. Recruits TBP and BRF2 to the U6 snRNA TATA box. The protein is snRNA-activating protein complex subunit 2 (Snapc2) of Mus musculus (Mouse).